The primary structure comprises 1906 residues: Myosin light chain kinase, smooth muscle (1906 aa).

2 Ig-like C2-type domains span residues 28–117 (PAFT…VELT) and 156–244 (PKFA…AELT). Disordered regions lie at residues 127 to 157 (SLPS…SPPK) and 309 to 453 (ETFY…SKVS). The span at 309–321 (ETFYTSREAKDGK) shows a compositional bias: basic and acidic residues. Polar residues-rich tracts occupy residues 345 to 354 (LQKTSSTITL) and 384 to 402 (PLMT…QVSP). The span at 403–424 (RSRETENRAGVRKSVKEEKREP) shows a compositional bias: basic and acidic residues. 4 Ig-like C2-type domains span residues 429 to 517 (PQFE…WLLT), 521 to 613 (PKVE…AQVT), 637 to 725 (PIFL…ATLT), and 735 to 830 (PWFI…SSAS). One copy of the IIA-1 repeat lies at 660 to 676 (VSANPCPEIIWLHNGKE). The interval 660-1833 (VSANPCPEII…EVMWYKDDQP (1174 aa)) is 4 X repeats, motif IIA. One copy of the IIB-1 repeat lies at 693–708 (SLYIQEVFPEDTGKYT). Positions 693–1866 (SLYIQEVFPE…VCGDDDAKYT (1174 aa)) are 5 X repeats, motif IIB. An IIA-2 repeat occupies 758-774 (IAGDPFPTVHWFKDGQE). Residues 791 to 807 (TLILRNVQSRHAGQYEI) form an IIB-2 repeat. Disordered regions lie at residues 831-881 (RAEM…QEDV) and 947-1086 (PKTL…APSF). Composition is skewed to basic and acidic residues over residues 833–850 (EMLR…RRDG) and 867–881 (SSSE…QEDV). The III-1 repeat unit spans residues 970–987 (AKKGTPKTPLPEKVPPPK). Residues 970–1226 (AKKGTPKTPL…TPPKAATPPQ (257 aa)) are 4 X repeats, motif III. Positions 977–988 (TPLPEKVPPPKP) are enriched in pro residues. One copy of the III-2 repeat lies at 999-1016 (AKKKPPAENGSASTPAPN). Residues 1039 to 1051 (VKKEEKNDRKCEH) are compositionally biased toward basic and acidic residues. An III-3 repeat occupies 1061–1078 (IGKKAENKPAASKPTPPP). 2 Ig-like C2-type domains span residues 1084–1172 (PSFT…CKVL) and 1225–1313 (PQIT…VNLT). An IIA-3 repeat occupies 1107-1123 (ISSDPPASVSWTLDSKA). One copy of the IIB-3 repeat lies at 1140–1156 (SLTIEKVMPEDGGEYKC). The interval 1180–1227 (KAAKPAEKKTKKPKTTLPPVLSTESSEATVKKKPAPKTPPKAATPPQI) is disordered. The III-4 repeat unit spans residues 1209–1226 (VKKKPAPKTPPKAATPPQ). One copy of the IIB-4 repeat lies at 1281 to 1297 (KLTISSTKQEHCGCYTL). The tract at residues 1317-1364 (KPDPPAGTPCASDIRSSSLTLSWYGSSYDGGSAVQSYTVEIWNSVDNK) is motif IA. Residues 1321 to 1414 (PAGTPCASDI…ESEVVKVGEK (94 aa)) enclose the Fibronectin type-III domain. A motif IB region spans residues 1385–1402 (REYKFRVRAANVYGISEP). Residues 1414 to 1433 (KQEEELKEEEAELSDDEGKE) are disordered. A compositionally biased stretch (acidic residues) spans 1415–1432 (QEEELKEEEAELSDDEGK). The Protein kinase domain occupies 1453–1708 (YNIEERLGSG…CTQCLQHPWL (256 aa)). ATP contacts are provided by residues 1459–1467 (LGSGKFGQV) and Lys-1482. The active-site Proton acceptor is the Asp-1574. Positions 1700–1763 (TQCLQHPWLQ…SGMSGRKASG (64 aa)) are calmodulin-binding. Residues 1716-1728 (EAKKLSKDRMKKY) form a calmodulin autoinhibition (AM13) region region. The segment at 1730–1749 (ARRKWQKTGHAVRAIGRLSS) is calmodulin recognition (RS20) region. Residue Ser-1762 is modified to Phosphoserine; by PKG. Ser-1768 carries the phosphoserine; by MAPK modification. The region spanning 1794–1885 (PYFTKTILDM…ATCTAELLVE (92 aa)) is the Ig-like C2-type 9 domain. The stretch at 1817–1833 (IEGYPDPEVMWYKDDQP) is one IIA-4 repeat. One copy of the IIB-5 repeat lies at 1851–1866 (SLTISEVCGDDDAKYT). The segment at 1885-1906 (ETMGKEGEGEGEGEEDEEEEEE) is disordered. Acidic residues predominate over residues 1893–1906 (GEGEGEEDEEEEEE).

The protein belongs to the protein kinase superfamily. CAMK Ser/Thr protein kinase family. In terms of assembly, all isoforms including Telokin bind calmodulin. Mg(2+) serves as cofactor. Ca(2+) is required as a cofactor. The C-terminus is deglutamylated, leading to the formation of Myosin light chain kinase, smooth muscle, deglutamylated form. The C-terminus is variable, with one to five C-terminal glutamyl residues being removed producing five forms differring in their number of C-terminal glutamyl residues. In terms of processing, acetylated. Post-translationally, phosphorylation of telokin by PKG has no significant effect on its myosin binding activity, but promotes translocation to the membrane. As to expression, isoform telokin is expressed in gizzard, heart, lung, intestine, and skeletal muscle although the levels of the expression in the latter were much less than that in the gizzard.

Its subcellular location is the cytoplasm. It is found in the cytosol. It localises to the membrane. The enzyme catalyses L-seryl-[myosin light chain] + ATP = O-phospho-L-seryl-[myosin light chain] + ADP + H(+). The catalysed reaction is L-threonyl-[myosin light chain] + ATP = O-phospho-L-threonyl-[myosin light chain] + ADP + H(+). Activated by phosphorylation on Tyr-478. Isoforms which lack this tyrosine residue are not regulated in this way. All catalytically active isoforms require binding to calcium and calmodulin for activation. In terms of biological role, phosphorylates a specific serine in the N-terminus of a myosin light chain, which leads to the formation of calmodulin/MLCK signal transduction complexes which allow selective transduction of calcium signals. This is Myosin light chain kinase, smooth muscle (Mylk) from Gallus gallus (Chicken).